Reading from the N-terminus, the 226-residue chain is 2-C-methyl-D-erythritol 4-phosphate cytidylyltransferase (226 aa).

The protein belongs to the IspD/TarI cytidylyltransferase family. IspD subfamily.

The enzyme catalyses 2-C-methyl-D-erythritol 4-phosphate + CTP + H(+) = 4-CDP-2-C-methyl-D-erythritol + diphosphate. It functions in the pathway isoprenoid biosynthesis; isopentenyl diphosphate biosynthesis via DXP pathway; isopentenyl diphosphate from 1-deoxy-D-xylulose 5-phosphate: step 2/6. In terms of biological role, catalyzes the formation of 4-diphosphocytidyl-2-C-methyl-D-erythritol from CTP and 2-C-methyl-D-erythritol 4-phosphate (MEP). The polypeptide is 2-C-methyl-D-erythritol 4-phosphate cytidylyltransferase (Actinobacillus pleuropneumoniae serotype 7 (strain AP76)).